The sequence spans 357 residues: Alpha-2-macroglobulin receptor-associated protein (357 aa).

The signal sequence occupies residues 1-34; sequence MAPRRVRSFLRGLPALLLLLLFLGPWPAASHGGK. Positions 32–52 are disordered; that stretch reads GGKYSREKNQPKPSPKRESGE. The segment covering 35–52 has biased composition (basic and acidic residues); sequence YSREKNQPKPSPKRESGE. Phosphoserine is present on residues S50 and S135. A coiled-coil region spans residues 219–310; that stretch reads SRHTELKEKL…AHEKLRHAES (92 aa). Positions 237–353 are LDL receptor binding; that stretch reads RLRRVSHQGY…DLSGRISRAR (117 aa). Residue T248 is modified to Phosphothreonine. The N-linked (GlcNAc...) asparagine glycan is linked to N268. Residues 354-357 carry the Prevents secretion from ER motif; the sequence is HNEL.

The protein belongs to the alpha-2-MRAP family. Interacts with the LRP1/alpha-2-macroglobulin receptor heavy and light chains; the interaction is transient and coincides with a reduction of ligand binding by the receptor. Interacts with LRP2/glycoprotein 330. Interacts with LRP1B; binding is followed by internalization and degradation. Interacts with LDLR. Interacts with SORL1. Interacts with LRP1; this interaction is followed by rapid internalization. Post-translationally, N-glycosylated.

Its subcellular location is the rough endoplasmic reticulum lumen. The protein resides in the endoplasmic reticulum-Golgi intermediate compartment lumen. It localises to the golgi apparatus. The protein localises to the cis-Golgi network. It is found in the golgi apparatus lumen. Its subcellular location is the endosome lumen. The protein resides in the cell surface. Molecular chaperone for LDL receptor-related proteins that may regulate their ligand binding activity along the secretory pathway. The sequence is that of Alpha-2-macroglobulin receptor-associated protein from Homo sapiens (Human).